The chain runs to 146 residues: Large ribosomal subunit protein uL15 (146 aa).

Positions 1–18 are enriched in basic and acidic residues; sequence MKLHELKPSEGSRKERNR. Residues 1-57 form a disordered region; that stretch reads MKLHELKPSEGSRKERNRVGRGIGSGNGKTSGKGHKGQNARSGGGVRPGFEGGQMPL. Gly residues-rich tracts occupy residues 21–31 and 42–52; these read RGIGSGNGKTS and SGGGVRPGFEG.

It belongs to the universal ribosomal protein uL15 family. As to quaternary structure, part of the 50S ribosomal subunit.

Binds to the 23S rRNA. This chain is Large ribosomal subunit protein uL15, found in Bacillus pumilus (strain SAFR-032).